The chain runs to 155 residues: Small ribosomal subunit protein uS7c (155 aa).

Belongs to the universal ribosomal protein uS7 family. As to quaternary structure, part of the 30S ribosomal subunit.

It is found in the plastid. The protein resides in the chloroplast. One of the primary rRNA binding proteins, it binds directly to 16S rRNA where it nucleates assembly of the head domain of the 30S subunit. The protein is Small ribosomal subunit protein uS7c (rps7) of Euonymus alatus (Burning bush).